Here is a 187-residue protein sequence, read N- to C-terminus: Inner membrane-spanning protein YciB (187 aa).

5 helical membrane passes run 22–42, 50–70, 80–100, 118–138, and 148–168; these read IYVATGALIVATAVQLIVTYA, MQLITFVIVTIFGSMTIFFHD, IIYVVLAVGLTASHLMGKSVV, INWAWVGFFSFFAGLNIYIAY, and FKVFGMLIATFAYMIATGVYI.

It belongs to the YciB family.

It is found in the cell inner membrane. Plays a role in cell envelope biogenesis, maintenance of cell envelope integrity and membrane homeostasis. The protein is Inner membrane-spanning protein YciB of Vibrio parahaemolyticus serotype O3:K6 (strain RIMD 2210633).